The sequence spans 492 residues: GMP reductase (492 aa).

NADP(+) is bound by residues 30-31 (SR) and arginine 78. 2 CBS domains span residues 99–162 (LIED…LVET) and 164–223 (MTPV…LNAT). Residues 260 to 262 (DIA) and 313 to 314 (VG) each bind NADP(+). Positions 314, 316, and 319 each coordinate K(+). Cysteine 319 (thioimidate intermediate) is an active-site residue. Residue threonine 321 is the Proton donor/acceptor of the active site. Arginine 322 contacts K(+). Residues 352–354 (DGG), 375–376 (GN), and 401–403 (GMA) contribute to the GMP site. NADP(+)-binding positions include methionine 402 and 454 to 457 (SGIS). Residues 490-492 (SKL) carry the Microbody targeting signal motif.

It belongs to the IMPDH/GMPR family. GuaC type 1 subfamily. As to quaternary structure, homotetramer.

It localises to the glycosome. It catalyses the reaction IMP + NH4(+) + NADP(+) = GMP + NADPH + 2 H(+). With respect to regulation, activated by GTP and inhibited by ATP and IMP. Mycophenolic acid (MPA) is a competitive inhibitor of the enzyme with respect to NADPH. In terms of biological role, catalyzes the irreversible NADPH-dependent deamination of GMP to IMP. It functions in the conversion of nucleobase, nucleoside and nucleotide derivatives of G to A nucleotides, and in maintaining the intracellular balance of A and G nucleotides. The sequence is that of GMP reductase from Leishmania major.